The primary structure comprises 426 residues: Adenylosuccinate synthetase (426 aa).

Residues 13–19 (GDEGKGK) and 41–43 (GHT) each bind GTP. The Proton acceptor role is filled by aspartate 14. Aspartate 14 and glycine 41 together coordinate Mg(2+). Residues 14-17 (DEGK), 39-42 (NAGH), threonine 129, arginine 143, glutamine 224, threonine 239, and arginine 303 contribute to the IMP site. The active-site Proton donor is the histidine 42. Residue 299–305 (TTTGRPR) coordinates substrate. GTP contacts are provided by residues arginine 305, 331 to 333 (KLD), and 414 to 416 (GTG).

Belongs to the adenylosuccinate synthetase family. In terms of assembly, homodimer. It depends on Mg(2+) as a cofactor.

It is found in the cytoplasm. It carries out the reaction IMP + L-aspartate + GTP = N(6)-(1,2-dicarboxyethyl)-AMP + GDP + phosphate + 2 H(+). The protein operates within purine metabolism; AMP biosynthesis via de novo pathway; AMP from IMP: step 1/2. In terms of biological role, plays an important role in the de novo pathway of purine nucleotide biosynthesis. Catalyzes the first committed step in the biosynthesis of AMP from IMP. The protein is Adenylosuccinate synthetase of Caldicellulosiruptor bescii (strain ATCC BAA-1888 / DSM 6725 / KCTC 15123 / Z-1320) (Anaerocellum thermophilum).